The sequence spans 213 residues: ATP phosphoribosyltransferase (213 aa).

It belongs to the ATP phosphoribosyltransferase family. Short subfamily. As to quaternary structure, heteromultimer composed of HisG and HisZ subunits.

The protein localises to the cytoplasm. It carries out the reaction 1-(5-phospho-beta-D-ribosyl)-ATP + diphosphate = 5-phospho-alpha-D-ribose 1-diphosphate + ATP. The protein operates within amino-acid biosynthesis; L-histidine biosynthesis; L-histidine from 5-phospho-alpha-D-ribose 1-diphosphate: step 1/9. In terms of biological role, catalyzes the condensation of ATP and 5-phosphoribose 1-diphosphate to form N'-(5'-phosphoribosyl)-ATP (PR-ATP). Has a crucial role in the pathway because the rate of histidine biosynthesis seems to be controlled primarily by regulation of HisG enzymatic activity. The chain is ATP phosphoribosyltransferase from Crocosphaera subtropica (strain ATCC 51142 / BH68) (Cyanothece sp. (strain ATCC 51142)).